The primary structure comprises 137 residues: Small ribosomal subunit protein uS12 (137 aa).

Residues 1-23 are disordered; the sequence is MPTINQLVRKPRKSNATKSKSPA. Aspartate 102 is subject to 3-methylthioaspartic acid.

Belongs to the universal ribosomal protein uS12 family. In terms of assembly, part of the 30S ribosomal subunit. Contacts proteins S8 and S17. May interact with IF1 in the 30S initiation complex.

With S4 and S5 plays an important role in translational accuracy. Functionally, interacts with and stabilizes bases of the 16S rRNA that are involved in tRNA selection in the A site and with the mRNA backbone. Located at the interface of the 30S and 50S subunits, it traverses the body of the 30S subunit contacting proteins on the other side and probably holding the rRNA structure together. The combined cluster of proteins S8, S12 and S17 appears to hold together the shoulder and platform of the 30S subunit. The protein is Small ribosomal subunit protein uS12 of Leuconostoc citreum (strain KM20).